Here is a 645-residue protein sequence, read N- to C-terminus: Envelope glycoprotein (645 aa).

The N-terminal stretch at 1–33 (MESPAFSKPLKDKINPWGPLIIMGILVRAGASV) is a signal peptide. Residues 32 to 237 (SVQRDSPHQV…QVLNVGPRVP (206 aa)) are receptor-binding domain (RBD). At 34 to 585 (QRDSPHQVFN…FNRSPWFTTL (552 aa)) the chain is on the extracellular side. N43 and N58 each carry an N-linked (GlcNAc...) asparagine; by host glycan. 2 cysteine pairs are disulfide-bonded: C113–C130 and C122–C135. The disordered stretch occupies residues 259-286 (PRPPRPPPSGAASMVPGAPPPSQQPGTG). A glycan (N-linked (GlcNAc...) asparagine; by host) is linked at N301. Disulfide bonds link C311–C314, C311–C538, C341–C395, C360–C372, C402–C415, and C530–C537. Positions 311 to 314 (CWLC) match the CXXC motif. N333 and N340 each carry an N-linked (GlcNAc...) asparagine; by host glycan. N373 and N409 each carry an N-linked (GlcNAc...) asparagine; by host glycan. The tract at residues 447-467 (VSLTLALLLGGLTMGGIAAGV) is fusion peptide. Positions 490 to 510 (DLGALEKSVSALEKSLTSLSE) form a coiled coil. The immunosuppression stretch occupies residues 513–529 (LQNRRGLDLLFLKEGGL). A CX6CC motif is present at residues 530–538 (CAALKKECC). Residues 586–606 (ISTIMGPLIVLLLILLFGPCI) traverse the membrane as a helical segment. C605 is lipidated: S-palmitoyl cysteine; by host. Residues 607-640 (LNRLVQFVKDRISVVQALVLTQQYHQLKSIDPEE) lie on the Cytoplasmic side of the membrane. Residues 630 to 633 (YHQL) carry the YXXL motif; contains endocytosis signal motif.

As to quaternary structure, the mature envelope protein (Env) consists of a trimer of SU-TM heterodimers attached by a labile interchain disulfide bond. The activated Env consists of SU monomers and TM trimers. Post-translationally, specific enzymatic cleavages in vivo yield mature proteins. Envelope glycoproteins are synthesized as an inactive precursor that is N-glycosylated and processed likely by host cell furin or by a furin-like protease in the Golgi to yield the mature SU and TM proteins. The cleavage site between SU and TM requires the minimal sequence [KR]-X-[KR]-R. The R-peptide is released from the C-terminus of the cytoplasmic tail of the TM protein upon particle formation as a result of proteolytic cleavage by the viral protease. Cleavage of this peptide is required for TM to become fusogenic. In terms of processing, the CXXC motif is highly conserved across a broad range of retroviral envelope proteins. It is thought to participate in the formation of a labile disulfide bond possibly with the CX6CC motif present in the transmembrane protein. Isomerization of the intersubunit disulfide bond to an SU intrachain disulfide bond is thought to occur upon receptor recognition in order to allow membrane fusion. The transmembrane protein is palmitoylated. Post-translationally, the R-peptide is palmitoylated.

It localises to the virion membrane. Its subcellular location is the host cell membrane. Its function is as follows. The surface protein (SU) attaches the virus to the host cell by binding to its receptor. This interaction activates a thiol in a CXXC motif of the C-terminal domain, where the other Cys residue participates in the formation of the intersubunit disulfide. The activated thiol will attack the disulfide and cause its isomerization into a disulfide isomer within the motif. This leads to SU displacement and TM refolding, and is thought to activate its fusogenic potential by unmasking its fusion peptide. Fusion occurs at the host cell plasma membrane. The transmembrane protein (TM) acts as a class I viral fusion protein. Under the current model, the protein has at least 3 conformational states: pre-fusion native state, pre-hairpin intermediate state, and post-fusion hairpin state. During viral and target cell membrane fusion, the coiled coil regions (heptad repeats) assume a trimer-of-hairpins structure, positioning the fusion peptide in close proximity to the C-terminal region of the ectodomain. The formation of this structure appears to drive apposition and subsequent fusion of viral and target cell membranes. Membranes fusion leads to delivery of the nucleocapsid into the cytoplasm. The chain is Envelope glycoprotein (env) from Xenotropic MuLV-related virus (isolate VP35) (XMRV).